The following is a 141-amino-acid chain: Hemoglobin subunit alpha (141 aa).

The region spanning 1-141 (VLSAADKTAI…VATALGSHYR (141 aa)) is the Globin domain. His59 provides a ligand contact to O2. His88 is a binding site for heme b.

Belongs to the globin family. In terms of assembly, heterotetramer of two alpha chains and two beta chains. Red blood cells.

Its function is as follows. Involved in oxygen transport from the lung to the various peripheral tissues. The sequence is that of Hemoglobin subunit alpha (HBA) from Squalus acanthias (Spiny dogfish).